Consider the following 947-residue polypeptide: Zinc finger CCCH domain-containing protein 18 (947 aa).

Methionine 1 is modified (N-acetylmethionine). 3 disordered regions span residues 1–218 (MDVA…PRPT), 275–295 (GGPV…TESA), and 387–921 (YTEA…TLSR). Residues serine 6, serine 32, serine 44, serine 57, serine 63, serine 70, serine 74, serine 79, and serine 91 each carry the phosphoserine modification. A compositionally biased stretch (basic and acidic residues) spans 73–85 (KSQDQDSEAHELS). Residues 94-104 (EEGDDAEEDGT) are compositionally biased toward acidic residues. Phosphothreonine is present on threonine 104. 2 positions are modified to phosphoserine: serine 105 and serine 113. Over residues 105-119 (SDLRDEASSVTRELD) the composition is skewed to basic and acidic residues. Acidic residues-rich tracts occupy residues 120 to 131 (EHELDYDEEVPE) and 138 to 153 (QEEE…EEEK). Residues 160–185 (EEGKPDVQSVGEKEPTEAAKEKKKED) are compositionally biased toward basic and acidic residues. Serine 168 is subject to Phosphoserine. Residues 186–202 (DDGEIDDGEIDDDDLEE) show a composition bias toward acidic residues. The segment covering 203–212 (GEVKDPSDRK) has biased composition (basic and acidic residues). Residues 214–240 (RPRPTCRFFMKGNCTWGMNCRFIHPGV) form a C3H1-type zinc finger. The span at 391–479 (EPYHNYRDRE…DRDKDKEKPK (89 aa)) shows a compositional bias: basic and acidic residues. Serine 482 is modified (phosphoserine). Lysine 505 is covalently cross-linked (Glycyl lysine isopeptide (Lys-Gly) (interchain with G-Cter in SUMO2)). The span at 505–515 (KRADEWKDPWR) shows a compositional bias: basic and acidic residues. Phosphoserine occurs at positions 527, 529, and 531. Residues 540 to 601 (SASSASASNS…SRSRSFSSSP (62 aa)) are compositionally biased toward low complexity. Positions 602 to 611 (SPSPTPSPHR) are enriched in pro residues. Residues lysine 617 and lysine 656 each participate in a glycyl lysine isopeptide (Lys-Gly) (interchain with G-Cter in SUMO2) cross-link. The segment covering 656 to 665 (KPGDLREARR) has biased composition (basic and acidic residues). Low complexity-rich tracts occupy residues 687–720 (GSSY…SVHS) and 731–745 (ASPV…PTPA). Basic and acidic residues predominate over residues 755–769 (KKEDGVREEKRKRDP). Low complexity predominate over residues 773-804 (PPKSSKAPAGGKASQQAAAPQQAAPGQPQQGS). Residue lysine 809 is modified to N6-acetyllysine. Lysine 812 is covalently cross-linked (Glycyl lysine isopeptide (Lys-Gly) (interchain with G-Cter in SUMO2)). Residues 819-836 (AAEKGSRKRYEPSDKDRQ) show a composition bias toward basic and acidic residues. 5 positions are modified to phosphoserine: serine 837, serine 846, serine 862, serine 887, and serine 890. The span at 887–918 (SPQSKSSSKVTSVPGKATDTATAGTKSGKAST) shows a compositional bias: low complexity. Lysine 902 participates in a covalent cross-link: Glycyl lysine isopeptide (Lys-Gly) (interchain with G-Cter in SUMO2). Residues 915–944 (KASTLSRREELLKQLKAVEDAIARKRAKIP) are a coiled coil.

As to quaternary structure, interacts with ZFC3H1 in a RNase-insensitive manner.

The protein localises to the nucleus. This chain is Zinc finger CCCH domain-containing protein 18 (Zc3h18), found in Rattus norvegicus (Rat).